A 373-amino-acid chain; its full sequence is Probable tRNA sulfurtransferase (373 aa).

One can recognise a THUMP domain in the interval 54–158 (NKNIEELSKV…NDVAYFYHKI (105 aa)). ATP-binding positions include 176 to 177 (LF), 201 to 202 (NF), K256, G278, and Q287.

Belongs to the ThiI family.

Its subcellular location is the cytoplasm. The enzyme catalyses [ThiI sulfur-carrier protein]-S-sulfanyl-L-cysteine + a uridine in tRNA + 2 reduced [2Fe-2S]-[ferredoxin] + ATP + H(+) = [ThiI sulfur-carrier protein]-L-cysteine + a 4-thiouridine in tRNA + 2 oxidized [2Fe-2S]-[ferredoxin] + AMP + diphosphate. It carries out the reaction [ThiS sulfur-carrier protein]-C-terminal Gly-Gly-AMP + S-sulfanyl-L-cysteinyl-[cysteine desulfurase] + AH2 = [ThiS sulfur-carrier protein]-C-terminal-Gly-aminoethanethioate + L-cysteinyl-[cysteine desulfurase] + A + AMP + 2 H(+). It functions in the pathway cofactor biosynthesis; thiamine diphosphate biosynthesis. Catalyzes the ATP-dependent transfer of a sulfur to tRNA to produce 4-thiouridine in position 8 of tRNAs, which functions as a near-UV photosensor. Also catalyzes the transfer of sulfur to the sulfur carrier protein ThiS, forming ThiS-thiocarboxylate. This is a step in the synthesis of thiazole, in the thiamine biosynthesis pathway. The sulfur is donated as persulfide by IscS. The protein is Probable tRNA sulfurtransferase of Saccharolobus islandicus (strain M.16.27) (Sulfolobus islandicus).